The chain runs to 209 residues: Thymidylate kinase (209 aa).

10 to 17 (GIDGCGKT) serves as a coordination point for ATP.

It belongs to the thymidylate kinase family.

It carries out the reaction dTMP + ATP = dTDP + ADP. Phosphorylation of dTMP to form dTDP in both de novo and salvage pathways of dTTP synthesis. The polypeptide is Thymidylate kinase (Synechococcus sp. (strain CC9605)).